We begin with the raw amino-acid sequence, 119 residues long: uncharacterized protein (119 aa).

2 helical membrane passes run 57-77 and 80-100; these read FSHHLSILQSMCLHFIISILF and YIFVFLFAFLLPSAFPLFILH.

The protein resides in the membrane. This is an uncharacterized protein from Saccharomyces cerevisiae (strain ATCC 204508 / S288c) (Baker's yeast).